Consider the following 1073-residue polypeptide: ATP-dependent helicase/deoxyribonuclease subunit B (1073 aa).

Belongs to the helicase family. AddB/RexB type 2 subfamily. As to quaternary structure, heterodimer of AddA and RexB. Mg(2+) serves as cofactor.

Its function is as follows. The heterodimer acts as both an ATP-dependent DNA helicase and an ATP-dependent, dual-direction single-stranded exonuclease. Recognizes the chi site generating a DNA molecule suitable for the initiation of homologous recombination. This subunit has 5' -&gt; 3' nuclease activity but not helicase activity. This chain is ATP-dependent helicase/deoxyribonuclease subunit B, found in Streptococcus equi subsp. zooepidemicus (strain H70).